We begin with the raw amino-acid sequence, 150 residues long: Transcriptional regulator MraZ (150 aa).

SpoVT-AbrB domains are found at residues 7 to 55 (SHAI…PEPE) and 84 to 127 (AALM…SEES).

The protein belongs to the MraZ family. Forms oligomers.

The protein localises to the cytoplasm. The protein resides in the nucleoid. The protein is Transcriptional regulator MraZ of Marinobacter nauticus (strain ATCC 700491 / DSM 11845 / VT8) (Marinobacter aquaeolei).